The chain runs to 98 residues: Small ribosomal subunit protein bS20 (98 aa).

Positions 1–12 (MAPRKPSKKVGP) are enriched in basic residues. The tract at residues 1 to 31 (MAPRKPSKKVGPQKRPSAEKRVITSKKKQLR) is disordered.

Belongs to the bacterial ribosomal protein bS20 family.

In terms of biological role, binds directly to 16S ribosomal RNA. The sequence is that of Small ribosomal subunit protein bS20 from Chlamydia trachomatis serovar L2 (strain ATCC VR-902B / DSM 19102 / 434/Bu).